The following is a 186-amino-acid chain: NADH-ubiquinone oxidoreductase 17.8 kDa subunit, mitochondrial (186 aa).

The transit peptide at 1 to 26 (MSSFRLGVSRVARQVRAPCVRNTRRY) directs the protein to the mitochondrion. The disordered stretch occupies residues 22 to 49 (NTRRYASDSHAPADHTHSAAGHGEHHHA). The segment covering 26-49 (YASDSHAPADHTHSAAGHGEHHHA) has biased composition (basic and acidic residues). The helical transmembrane segment at 58-78 (LGTAFYVIFGAIPAFGALYYF) threads the bilayer.

In terms of assembly, complex I is composed of about 40 different subunits.

The protein resides in the mitochondrion inner membrane. The enzyme catalyses a ubiquinone + NADH + 5 H(+)(in) = a ubiquinol + NAD(+) + 4 H(+)(out). Functionally, transfer of electrons from NADH to the respiratory chain. The immediate electron acceptor for the enzyme is believed to be ubiquinone. This Neurospora crassa (strain ATCC 24698 / 74-OR23-1A / CBS 708.71 / DSM 1257 / FGSC 987) protein is NADH-ubiquinone oxidoreductase 17.8 kDa subunit, mitochondrial (nuo17.8).